We begin with the raw amino-acid sequence, 181 residues long: Probable cobalt-precorrin-6B C(15)-methyltransferase (decarboxylating) (181 aa).

S-adenosyl-L-methionine is bound by residues Thr16, 40–44 (GCGSG), Asp61, and Ala89.

This sequence belongs to the methyltransferase superfamily. Archaeal-type CbiT family.

The catalysed reaction is Co-precorrin-6B + S-adenosyl-L-methionine = Co-precorrin-7 + S-adenosyl-L-homocysteine + CO2. It participates in cofactor biosynthesis; adenosylcobalamin biosynthesis; cob(II)yrinate a,c-diamide from sirohydrochlorin (anaerobic route): step 8/10. Catalyzes the methylation of C-15 in cobalt-precorrin-6B followed by the decarboxylation of C-12 to form cobalt-precorrin-7. The chain is Probable cobalt-precorrin-6B C(15)-methyltransferase (decarboxylating) from Methanococcus maripaludis (strain C6 / ATCC BAA-1332).